Here is a 582-residue protein sequence, read N- to C-terminus: Semenogelin-2 (582 aa).

Residues 1–23 (MKSIILFVLSLLLILEKQAAVMG) form the signal peptide. 5 disordered regions span residues 25–62 (KGGSKGQLSSGSSRFPHRHRSQHYSGQKDKQHTESKGS), 131–156 (KGGQVHHGTQNPSQDQGNSPSGKGIF), 173–192 (KEQASASGAQKGRTQGGSQS), 272–477 (NLNQ…EQRQ), and 502–554 (VEGK…SGAH). Over residues 50–59 (GQKDKQHTES) the composition is skewed to basic and acidic residues. 2 stretches are compositionally biased toward polar residues: residues 137–151 (HGTQNPSQDQGNSPS) and 174–192 (EQASASGAQKGRTQGGSQS). A compositionally biased stretch (basic and acidic residues) spans 292–310 (RTEERQLNHGEKSVQKDVS). Positions 325-335 (KSQNQVTIPSQ) are enriched in polar residues. Basic and acidic residues predominate over residues 336 to 345 (DQEHGHKENK). The segment covering 385-395 (KSQNQVTIPSQ) has biased composition (polar residues). Over residues 396 to 405 (DQEHGHKENK) the composition is skewed to basic and acidic residues. Polar residues predominate over residues 445-455 (KSQNQVTIPSQ). The segment covering 456 to 465 (DQEHGHKENK) has biased composition (basic and acidic residues). Composition is skewed to polar residues over residues 466-477 (ISYQSSSTEQRQ) and 506-529 (SQIQTPNPNQGQWSGQNAKGNSGK). Residues 537–546 (LLSHEQEGRY) are compositionally biased toward basic and acidic residues.

It belongs to the semenogelin family. In terms of assembly, interacts with SERPINA5.

It is found in the secreted. Its function is as follows. Participates in the formation of a gel matrix (sperm coagulum) entrapping the accessory gland secretions and ejaculated spermatozoa. The sequence is that of Semenogelin-2 (SEMG2) from Macaca nemestrina (Pig-tailed macaque).